Here is a 147-residue protein sequence, read N- to C-terminus: Ribonuclease H (147 aa).

Positions 1-142 constitute an RNase H type-1 domain; the sequence is MAGKVVMYTD…ADELANRGVR (142 aa). Residues aspartate 10, glutamate 48, aspartate 70, and aspartate 134 each coordinate Mg(2+).

Belongs to the RNase H family. As to quaternary structure, monomer. Mg(2+) is required as a cofactor.

The protein localises to the cytoplasm. It catalyses the reaction Endonucleolytic cleavage to 5'-phosphomonoester.. In terms of biological role, endonuclease that specifically degrades the RNA of RNA-DNA hybrids. The sequence is that of Ribonuclease H from Marinobacter nauticus (strain ATCC 700491 / DSM 11845 / VT8) (Marinobacter aquaeolei).